The primary structure comprises 631 residues: Phosphomethylpyrimidine synthase (631 aa).

Residues N239, M268, Y297, H333, 353–355 (SRG), 394–397 (DGLR), and E433 each bind substrate. Zn(2+) is bound at residue H437. A substrate-binding site is contributed by Y460. H501 is a binding site for Zn(2+). C581, C584, and C589 together coordinate [4Fe-4S] cluster.

This sequence belongs to the ThiC family. As to quaternary structure, homodimer. It depends on [4Fe-4S] cluster as a cofactor.

The catalysed reaction is 5-amino-1-(5-phospho-beta-D-ribosyl)imidazole + S-adenosyl-L-methionine = 4-amino-2-methyl-5-(phosphooxymethyl)pyrimidine + CO + 5'-deoxyadenosine + formate + L-methionine + 3 H(+). It participates in cofactor biosynthesis; thiamine diphosphate biosynthesis. Its function is as follows. Catalyzes the synthesis of the hydroxymethylpyrimidine phosphate (HMP-P) moiety of thiamine from aminoimidazole ribotide (AIR) in a radical S-adenosyl-L-methionine (SAM)-dependent reaction. The sequence is that of Phosphomethylpyrimidine synthase from Salmonella typhi.